Here is a 271-residue protein sequence, read N- to C-terminus: Keratin-associated protein 10-5 (271 aa).

22 tandem repeats follow at residues 26–30 (CCEPP), 51–55 (CCQAA), 73–77 (CCQPA), 78–82 (CCASS), 88–92 (CCVPV), 93–97 (CCKPV), 98–102 (CCLPT), 110–114 (CCQQS), 120–124 (CCASS), 130–134 (CCVPV), 135–139 (CCKPV), 140–144 (CCVPT), 152–156 (CCQHS), 162–166 (CCTSS), 177–181 (CCKPV), 187–191 (CCVPV), 199–203 (CCQQS), 209–213 (CCTTS), 214–218 (CCRPS), 233–237 (CCLPI), 240–244 (CCAPA), and 251–255 (CCRPA). A 22 X 5 AA repeats of C-C-X(3) region spans residues 26–255 (CCEPPCGTAP…SYQASCCRPA (230 aa)).

It belongs to the KRTAP type 10 family. As to quaternary structure, interacts with hair keratins. As to expression, restricted to a narrow region of the hair fiber cuticle, lying approximately 20 cell layers above the apex of the dermal papilla of the hair root; not detected in any other tissues.

Its function is as follows. In the hair cortex, hair keratin intermediate filaments are embedded in an interfilamentous matrix, consisting of hair keratin-associated proteins (KRTAP), which are essential for the formation of a rigid and resistant hair shaft through their extensive disulfide bond cross-linking with abundant cysteine residues of hair keratins. The matrix proteins include the high-sulfur and high-glycine-tyrosine keratins. The sequence is that of Keratin-associated protein 10-5 (KRTAP10-5) from Homo sapiens (Human).